The following is a 322-amino-acid chain: Sideroflexin-2 (322 aa).

At M1 the chain carries N-acetylmethionine. 5 helical membrane passes run 100-122 (MIITGFMLQFYRTMPAVIFWQWV), 142-164 (SVRQMALSYFTATTTAVATAVGM), 174-192 (LVGRWVPFAAVAAANCVNI), 228-250 (VVISRITMSAPGMILLPVIMERL), and 265-287 (PLQVMLSGCFLIFMVPVACGLFP).

This sequence belongs to the sideroflexin family. In terms of tissue distribution, widely expressed, highest levels in kidney, liver, and pancreas.

The protein resides in the mitochondrion inner membrane. Its subcellular location is the mitochondrion outer membrane. It catalyses the reaction L-serine(in) = L-serine(out). Mitochondrial amino-acid transporter that mediates transport of serine into mitochondria. Involved in mitochondrial iron homeostasis by regulating heme biosynthesis. This chain is Sideroflexin-2, found in Homo sapiens (Human).